Reading from the N-terminus, the 2473-residue chain is Neurogenic locus notch homolog protein 2 (2473 aa).

An N-terminal signal peptide occupies residues 1 to 25 (MPALRPAALRALLWLWLCGAGPAHA). 4 consecutive EGF-like domains span residues 26 to 63 (LQCR…EYCQ), 64 to 102 (HRDP…EDCQ), 105 to 143 (TSHP…KQCQ), and 144 to 180 (WTDA…QKCE). Residues 26-1679 (LQCRGGQEPC…SELESPRNAQ (1654 aa)) lie on the Extracellular side of the membrane. 83 disulfide bridges follow: C28/C41, C35/C51, C53/C62, C68/C79, C73/C90, C92/C101, C109/C121, C115/C131, C133/C142, C148/C159, C153/C168, C170/C179, C186/C198, C192/C207, C209/C218, C230/C246, C248/C257, C264/C275, C269/C284, C286/C295, C302/C315, C309/C324, C326/C335, C342/C353, C347/C362, C364/C373, C379/C390, C384/C401, C403/C412, C419/C433, C427/C442, C444/C453, C460/C471, C465/C480, C482/C491, C498/C509, C503/C518, C520/C529, C536/C547, C541/C556, C558/C567, C574/C584, C579/C593, C595/C604, C611/C622, C616/C631, C633/C642, C649/C659, C654/C668, C670/C679, C686/C697, C691/C706, C708/C717, C724/C734, C729/C743, C745/C754, C761/C772, C766/C781, C783/C792, C799/C810, C804/C819, C821/C830, C837/C848, C842/C859, C861/C870, C877/C888, C882/C897, C899/C908, C915/C926, C920/C935, C937/C946, C953/C964, C958/C973, C975/C984, C991/C1002, C996/C1011, C1013/C1022, C1029/C1040, C1034/C1049, C1051/C1060, C1067/C1078, C1072/C1087, and C1089/C1098. N46 is a glycosylation site (N-linked (GlcNAc...) asparagine). A glycan (N-linked (GlcNAc...) asparagine) is linked at N155. The EGF-like 5; calcium-binding domain occupies 182–219 (DINECDIPGRCQHGGTCLNLPGSYRCQCPQGFTGQHCD). Positions 221–258 (PYVPCAPSPCVNGGTCRQTGDFTFECNCLPGFEGSTCE) constitute an EGF-like 6; incomplete domain. Residues 260–296 (NIDDCPNHKCQNGGVCVDGVNTYNCRCPPQWTGQFCT) enclose the EGF-like 7; calcium-binding domain. Residues 298–336 (DVDECLLQPNACQNGGTCTNRNGGYGCVCVNGWSGDDCS) enclose the EGF-like 8; calcium-binding domain. One can recognise an EGF-like 9; calcium-binding domain in the interval 338–374 (NIDDCAYASCTPGSTCIDRVASFSCLCPEGKAGLLCH). In terms of domain architecture, EGF-like 10 spans 375–413 (LDDACISNPCHKGALCDTNPLNGQYICTCPQGYKGADCT). The 40-residue stretch at 415–454 (DVDECAMANSNPCEHAGKCVNTDGAFHCECLKGYAGPRCE) folds into the EGF-like 11; calcium-binding domain. An EGF-like 12; calcium-binding domain is found at 456-492 (DINECHSDPCQNDATCLDKIGGFTCLCMPGFKGVHCE). One can recognise an EGF-like 13; calcium-binding domain in the interval 494–530 (EVNECQSNPCVNNGQCVDKVNRFQCLCPPGFTGPVCQ). One can recognise an EGF-like 14; calcium-binding domain in the interval 532-568 (DIDDCSSTPCLNGAKCIDHPNGYECQCATGFTGILCD). An EGF-like 15; calcium-binding domain is found at 570–605 (NIDNCDPDPCHHGQCQDGIDSYTCICNPGYMGAICS). Positions 607 to 643 (QIDECYSSPCLNDGRCIDLVNGYQCNCQPGTSGLNCE) constitute an EGF-like 16; calcium-binding domain. S613 carries an O-linked (Glc...) serine; alternate glycan. O-linked (Xyl...) serine; alternate glycosylation occurs at S613. The EGF-like 17; calcium-binding domain maps to 645-680 (NFDDCASNPCMHGVCVDGINRYSCVCSPGFTGQRCN). The region spanning 682–718 (DIDECASNPCRKGATCINDVNGFRCICPEGPHHPSCY) is the EGF-like 18; calcium-binding domain. One can recognise an EGF-like 19 domain in the interval 720–755 (QVNECLSNPCIHGNCTGGLSGYKCLCDAGWVGVNCE). N-linked (GlcNAc...) asparagine glycosylation is present at N733. The EGF-like 20; calcium-binding domain occupies 757–793 (DKNECLSNPCQNGGTCNNLVNGYRCTCKKGFKGYNCQ). The EGF-like 21; calcium-binding domain occupies 795 to 831 (NIDECASNPCLNQGTCFDDVSGYTCHCMLPYTGKNCQ). Residues 833 to 871 (VLAPCSPNPCENAAVCKEAPNFESFSCLCAPGWQGKRCT) enclose the EGF-like 22 domain. Residues 873–909 (DVDECISKPCMNNGVCHNTQGSYVCECPPGFSGMDCE) enclose the EGF-like 23; calcium-binding domain. The 37-residue stretch at 911–947 (DINDCLANPCQNGGSCVDHVNTFSCQCHPGFIGDKCQ) folds into the EGF-like 24; calcium-binding domain. The EGF-like 25; calcium-binding domain maps to 949–985 (DMNECLSEPCKNGGTCSDYVNSYTCTCPAGFHGVHCE). The EGF-like 26; calcium-binding domain occupies 987–1023 (NIDECTESSCFNGGTCVDGINSFSCLCPVGFTGPFCL). Residues 1025–1061 (DINECSSNPCLNAGTCVDGLGTYRCICPLGYTGKNCQ) form the EGF-like 27; calcium-binding domain. EGF-like domains are found at residues 1063–1099 (LVNL…AYCD) and 1101–1147 (LNVS…SYCE). An N-linked (GlcNAc...) asparagine glycan is attached at N1102. 24 disulfide bridges follow: C1105–C1126, C1120–C1135, C1137–C1146, C1153–C1164, C1158–C1173, C1175–C1184, C1191–C1202, C1196–C1211, C1213–C1222, C1229–C1241, C1235–C1250, C1252–C1261, C1268–C1281, C1273–C1290, C1292–C1301, C1308–C1319, C1313–C1331, C1333–C1346, C1378–C1389, C1383–C1400, C1402–C1411, C1425–C1448, C1430–C1443, and C1439–C1455. The EGF-like 30; calcium-binding domain maps to 1149-1185 (QLDECASNPCQHGATCNDFIGGYRCECVPGYQGVNCE). The EGF-like 31; calcium-binding domain maps to 1187–1223 (EVDECQNQPCQNGGTCIDLVNHFKCSCPPGTRGLLCE). One can recognise an EGF-like 32; calcium-binding domain in the interval 1225–1262 (NIDECAGGPHCLNGGQCVDRIGGYTCRCLPGFAGERCE). EGF-like domains are found at residues 1264–1302 (DINE…RHCE), 1304–1343 (FLDV…ARCQ), and 1375–1412 (ESGC…SHCE). 3 LNR repeats span residues 1425 to 1465 (CQSQ…PWAN), 1466 to 1502 (CTST…NSKT), and 1503 to 1544 (CKYD…NLAE). The tract at residues 1425–1679 (CQSQYCADKA…SELESPRNAQ (255 aa)) is negative regulatory region (NRR). An N-linked (GlcNAc...) asparagine glycan is attached at N1465. Disulfide bonds link C1466-C1489, C1472-C1484, C1480-C1496, C1503-C1527, C1509-C1522, C1518-C1534, and C1634-C1641. The helical transmembrane segment at 1680–1700 (LLYLLAVAVVIILFFILLGVI) threads the bilayer. At 1701 to 2473 (MAKRKRKHGF…PPHSNMQVYA (773 aa)) the chain is on the cytoplasmic side. At T1718 the chain carries Phosphothreonine. Residues 1755–1778 (GTSEHWVDDEGPQPKKAKAEDEAL) are disordered. S1780 carries the post-translational modification Phosphoserine. T1803 carries the post-translational modification Phosphothreonine. A Phosphoserine modification is found at S1805. T1809 is modified (phosphothreonine). 6 ANK repeats span residues 1828–1872 (DGCT…SLQA), 1877–1906 (TGEM…DANA), 1910–1940 (MGRC…DLDA), 1944–1973 (DGTT…DVNA), 1977–2006 (HGKS…NRDM), and 2010–2039 (KEET…NRDI). 2 positions are modified to phosphoserine: S1843 and S1846. Phosphoserine occurs at positions 2071, 2079, and 2082. T2098 is subject to Phosphothreonine. 3 disordered regions span residues 2098 to 2117 (TPMG…PTSL), 2122 to 2169 (KEAK…TSSP), and 2382 to 2473 (VGKY…QVYA). A compositionally biased stretch (basic residues) spans 2099 to 2108 (PMGKKARRPN). Polar residues-rich tracts occupy residues 2140-2151 (VQLSESSVTLSP) and 2390-2400 (SQHSYASSNAA). A compositionally biased stretch (low complexity) spans 2419 to 2446 (PSPESPDQWSSSSPHSASDWSDVTTSPT). The span at 2447 to 2456 (PGGGGGGQRG) shows a compositional bias: gly residues.

It belongs to the NOTCH family. In terms of assembly, heterodimer of a C-terminal fragment N(TM) and an N-terminal fragment N(EC) which are probably linked by disulfide bonds. Interacts with MAML1, MAML2 and MAML3 which act as transcriptional coactivators for NOTCH2. Interacts with RELA/p65. Interacts with HIF1AN. Interacts (via ANK repeats) with TCIM, the interaction inhibits the nuclear translocation of NOTCH2 N2ICD. Interacts with CUL1, RBX1, SKP1 and FBXW7 that are SCF(FBXW7) E3 ubiquitin-protein ligase complex components. Interacts with MINAR1; this interaction increases MINAR1 stability and function. Interacts with MDK; this interaction mediates a nuclear accumulation of NOTCH2 and therefore activation of NOTCH2 signaling leading to interaction between HES1 and STAT3. Interacts with MINAR2. Synthesized in the endoplasmic reticulum as an inactive form which is proteolytically cleaved by a furin-like convertase in the trans-Golgi network before it reaches the plasma membrane to yield an active, ligand-accessible form. Cleavage results in a C-terminal fragment N(TM) and a N-terminal fragment N(EC). Following ligand binding, it is cleaved by TNF-alpha converting enzyme (TACE) to yield a membrane-associated intermediate fragment called notch extracellular truncation (NEXT). This fragment is then cleaved by presenilin dependent gamma-secretase to release a notch-derived peptide containing the intracellular domain (NICD) from the membrane. In terms of processing, hydroxylated by HIF1AN. Post-translationally, can be either O-glucosylated or O-xylosylated at Ser-613 by POGLUT1. Phosphorylated by GSK3. GSK3-mediated phosphorylation is necessary for NOTCH2 recognition by FBXW7, ubiquitination and degradation via the ubiquitin proteasome pathway. In terms of tissue distribution, expressed in the brain, liver, kidney, neuroepithelia, somites, optic vesicles and branchial arches, but not heart.

It localises to the cell membrane. Its subcellular location is the nucleus. It is found in the cytoplasm. Functionally, functions as a receptor for membrane-bound ligands Jagged-1 (JAG1), Jagged-2 (JAG2) and Delta-1 (DLL1) to regulate cell-fate determination. Upon ligand activation through the released notch intracellular domain (NICD) it forms a transcriptional activator complex with RBPJ/RBPSUH and activates genes of the enhancer of split locus. Affects the implementation of differentiation, proliferation and apoptotic programs. May play an essential role in postimplantation development, probably in some aspect of cell specification and/or differentiation. In collaboration with RELA/p65 enhances NFATc1 promoter activity and positively regulates RANKL-induced osteoclast differentiation. Positively regulates self-renewal of liver cancer cells. The chain is Neurogenic locus notch homolog protein 2 from Mus musculus (Mouse).